The following is a 432-amino-acid chain: UPF0597 protein APJL_1638 (432 aa).

Belongs to the UPF0597 family.

The protein is UPF0597 protein APJL_1638 of Actinobacillus pleuropneumoniae serotype 3 (strain JL03).